We begin with the raw amino-acid sequence, 253 residues long: Phosphoglycerate mutase 2 (253 aa).

The residue at position 3 (T3) is a Phosphothreonine. Residues 10–17 (RHGESTWN), 23–24 (CG), R62, 89–92 (ERHY), K100, and 116–117 (RR) contribute to the substrate site. Catalysis depends on H11, which acts as the Tele-phosphohistidine intermediate. Residue S14 is modified to Phosphoserine. The active-site Proton donor/acceptor is E89. Residue S118 is modified to Phosphoserine. Phosphotyrosine occurs at positions 132 and 133. Position 135 is a phosphoserine (S135). A Phosphothreonine modification is found at T152. 187–188 (GN) is a binding site for substrate.

Belongs to the phosphoglycerate mutase family. BPG-dependent PGAM subfamily. Homodimer.

It carries out the reaction (2R)-2-phosphoglycerate = (2R)-3-phosphoglycerate. The catalysed reaction is (2R)-3-phospho-glyceroyl phosphate = (2R)-2,3-bisphosphoglycerate + H(+). Functionally, interconversion of 3- and 2-phosphoglycerate with 2,3-bisphosphoglycerate as the primer of the reaction. Can also catalyze the reaction of EC 5.4.2.4 (synthase), but with a reduced activity. The protein is Phosphoglycerate mutase 2 (PGAM2) of Bos taurus (Bovine).